The chain runs to 265 residues: Methylthioribulose-1-phosphate dehydratase (265 aa).

Residue Cys-116 coordinates substrate. Residues His-134 and His-136 each contribute to the Zn(2+) site. Glu-159 (proton donor/acceptor) is an active-site residue. His-224 is a Zn(2+) binding site.

It belongs to the aldolase class II family. MtnB subfamily. It depends on Zn(2+) as a cofactor.

It is found in the cytoplasm. It carries out the reaction 5-(methylsulfanyl)-D-ribulose 1-phosphate = 5-methylsulfanyl-2,3-dioxopentyl phosphate + H2O. It functions in the pathway amino-acid biosynthesis; L-methionine biosynthesis via salvage pathway; L-methionine from S-methyl-5-thio-alpha-D-ribose 1-phosphate: step 2/6. Catalyzes the dehydration of methylthioribulose-1-phosphate (MTRu-1-P) into 2,3-diketo-5-methylthiopentyl-1-phosphate (DK-MTP-1-P). This is Methylthioribulose-1-phosphate dehydratase from Debaryomyces hansenii (strain ATCC 36239 / CBS 767 / BCRC 21394 / JCM 1990 / NBRC 0083 / IGC 2968) (Yeast).